The sequence spans 917 residues: Auxin response factor 17 (917 aa).

Residues 134 to 236 (FCKTLTASDT…QLLLGIRRAN (103 aa)) constitute a DNA-binding region (TF-B3). Residues 571 to 649 (SVPNALSPFS…RPTAVPVPDP (79 aa)) are disordered. Low complexity-rich tracts occupy residues 576–594 (LSPFSQLSSPSQSSPMTLQ) and 604–620 (SYPDTSMSSLSPSNTST). Positions 786–870 (ATFVKVYKSG…SCIKILSPQE (85 aa)) constitute a PB1 domain.

Belongs to the ARF family. In terms of assembly, homodimers and heterodimers.

The protein localises to the nucleus. In terms of biological role, auxin response factors (ARFs) are transcriptional factors that bind specifically to the DNA sequence 5'-TGTCTC-3' found in the auxin-responsive promoter elements (AuxREs). In Oryza sativa subsp. indica (Rice), this protein is Auxin response factor 17 (ARF17).